Here is a 20-residue protein sequence, read N- to C-terminus: Protein PR-L3 (20 aa).

The protein belongs to the BetVI family.

This chain is Protein PR-L3, found in Lupinus luteus (European yellow lupine).